A 603-amino-acid chain; its full sequence is Insulin-like growth factor-binding protein complex acid labile subunit (603 aa).

The signal sequence occupies residues 1–23 (MALRTGSPALVVLLAFWVALGPC). In terms of domain architecture, LRRNT spans 32–74 (ASADAEGPQCPVTCTCSYDDYTDELSVFCSSRNLTQLPDGIPV). Cystine bridges form between Cys-41–Cys-47 and Cys-45–Cys-60. Asn-64, Asn-85, and Asn-96 each carry an N-linked (GlcNAc...) asparagine glycan. 19 LRR repeats span residues 75-96 (STRA…AFQN), 99-120 (SLDF…ALLG), 123-144 (NLYH…LFRH), 147-168 (SLAS…LFRG), 171-192 (HLWD…VFQG), 195-216 (NLHE…LLCG), 219-240 (ELRE…VFIH), 243-264 (RLQK…AFLG), 267-288 (ALRW…TFPG), 291-312 (GLHV…TFKD), 315-336 (FLEE…TFEG), 339-360 (QLEV…AFFG), 363-384 (NVAV…VFQG), 387-408 (RLHS…TFAG), 411-432 (GLRR…SLAG), 435-456 (ELLE…LFQG), 459-480 (QLEY…VLGP), 483-504 (RAFW…LFSS), and 507-528 (RLRY…PGLE). Residue Asn-368 is glycosylated (N-linked (GlcNAc...) asparagine). N-linked (GlcNAc...) asparagine glycosylation occurs at Asn-515. In terms of domain architecture, LRRCT spans 535–603 (NPWDCSCPLK…DISETLFVHC (69 aa)). 3 disulfide bridges follow: Cys-539–Cys-581, Cys-541–Cys-603, and Cys-565–Cys-570. 2 N-linked (GlcNAc...) asparagine glycosylation sites follow: Asn-578 and Asn-586.

In terms of assembly, forms a ternary complex with IGF1 and IGFBP3.

The protein localises to the secreted. Its subcellular location is the extracellular space. Its function is as follows. May have an important role in regulating the access of circulating IGFs to the tissues. This chain is Insulin-like growth factor-binding protein complex acid labile subunit (Igfals), found in Mus musculus (Mouse).